The sequence spans 2202 residues: Activating signal cointegrator 1 complex subunit 3 (2202 aa).

Residues 1–400 (MALPRLTGAL…RQRDADVEKI (400 aa)) form a required for interaction with ASCC2 region. The residue at position 12 (serine 12) is a Phosphoserine. Coiled-coil stretches lie at residues 18–79 (KQDN…AAKQ) and 328–356 (IQSE…KAGE). Residues 486 to 669 (ETAYNTNENM…FLHVNPYIGL (184 aa)) enclose the Helicase ATP-binding 1 domain. 499-506 (APTGAGKT) contacts ATP. Lysine 572 bears the N6-acetyllysine mark. A DEVH box motif is present at residues 611 to 614 (DEVH). Residues 728 to 914 (TVRTAMSLIE…GTVTNVEEAV (187 aa)) form the Helicase C-terminal 1 domain. Residues 978 to 1287 (STDLGRTASH…GAEAVCIINF (310 aa)) enclose the SEC63 1 domain. The Helicase ATP-binding 2 domain maps to 1336–1511 (HTLYHTDCNV…WLNIKQMGLF (176 aa)). Position 1349–1356 (1349–1356 (APTGSGKT)) interacts with ATP. A DEIH box motif is present at residues 1453–1456 (DEIH). One can recognise a Helicase C-terminal 2 domain in the interval 1544 to 1739 (PAFQAIRSHS…VLSDHLNAEI (196 aa)). The SEC63 2 domain occupies 1812-2176 (PLTYGRIASY…LGLDQQYDIY (365 aa)). Residue serine 2195 is modified to Phosphoserine.

The protein belongs to the helicase family. Identified in the ASCC complex that contains ASCC1, ASCC2 and ASCC3. Functions as scaffolding subunit that interacts directly with both ASCC1 and ASCC2. Interacts directly with ALKBH3, and thereby recruits ALKBH3 to the ASCC complex. Part of the ASC-1/TRIP4 complex, that contains TRIP4, ASCC1, ASCC2 and ASCC3. Part of the RQT (ribosome quality control trigger) complex, that contains ASCC2, ASCC3 and TRIP4. Associates with ribosomes; recruited to collided ribosomes. Interacts with ZCCHC4. Interacts with ZNF598. Interacts with RPS3. As to expression, ubiquitous.

The protein localises to the nucleus. It localises to the nucleus speckle. It is found in the cytoplasm. The protein resides in the cytosol. The enzyme catalyses Couples ATP hydrolysis with the unwinding of duplex DNA by translocating in the 3'-5' direction.. The catalysed reaction is ATP + H2O = ADP + phosphate + H(+). In terms of biological role, ATPase involved both in DNA repair and rescue of stalled ribosomes. 3'-5' DNA helicase involved in repair of alkylated DNA: promotes DNA unwinding to generate single-stranded substrate needed for ALKBH3, enabling ALKBH3 to process alkylated N3-methylcytosine (3mC) within double-stranded regions. Also involved in activation of the ribosome quality control (RQC) pathway, a pathway that degrades nascent peptide chains during problematic translation. Drives the splitting of stalled ribosomes that are ubiquitinated in a ZNF598-dependent manner, as part of the ribosome quality control trigger (RQT) complex. Part of the ASC-1 complex that enhances NF-kappa-B, SRF and AP1 transactivation. This Homo sapiens (Human) protein is Activating signal cointegrator 1 complex subunit 3 (ASCC3).